The following is a 216-amino-acid chain: Elongation factor Ts (216 aa).

Positions 81–84 (TDFV) are involved in Mg(2+) ion dislocation from EF-Tu.

This sequence belongs to the EF-Ts family.

The protein localises to the cytoplasm. In terms of biological role, associates with the EF-Tu.GDP complex and induces the exchange of GDP to GTP. It remains bound to the aminoacyl-tRNA.EF-Tu.GTP complex up to the GTP hydrolysis stage on the ribosome. The protein is Elongation factor Ts of Geobacter sp. (strain M21).